The sequence spans 440 residues: Adenylyltransferase and sulfurtransferase UBA4 (440 aa).

Met-1 is subject to N-acetylmethionine. ATP-binding positions include Gly-77, Asp-98, 105–109, Lys-122, and 166–167; these read SNLHR and DS. Cys-208 and Cys-211 together coordinate Zn(2+). Residue Cys-225 is the Glycyl thioester intermediate; for adenylyltransferase activity of the active site. The Zn(2+) site is built by Cys-286 and Cys-289. Phosphoserine is present on Ser-326. Positions 339–438 constitute a Rhodanese domain; sequence FLAKHIFLDV…YIDDIDQTIP (100 aa). Cys-397 serves as the catalytic Cysteine persulfide intermediate; for sulfurtransferase activity.

In the N-terminal section; belongs to the HesA/MoeB/ThiF family. UBA4 subfamily. Zn(2+) is required as a cofactor.

The protein localises to the cytoplasm. It is found in the cytosol. The protein operates within tRNA modification; 5-methoxycarbonylmethyl-2-thiouridine-tRNA biosynthesis. Plays a central role in 2-thiolation of mcm(5)S(2)U at tRNA wobble positions of cytosolic tRNA(Lys), tRNA(Glu) and tRNA(Gln). Acts by mediating the C-terminal thiocarboxylation of sulfur carrier URM1. Its N-terminus first activates URM1 as acyl-adenylate (-COAMP), then the persulfide sulfur on the catalytic cysteine is transferred to URM1 to form thiocarboxylation (-COSH) of its C-terminus. The reaction probably involves hydrogen sulfide that is generated from the persulfide intermediate and that acts as a nucleophile towards URM1. Subsequently, a transient disulfide bond is formed. Does not use thiosulfate as sulfur donor; NFS1 probably acting as a sulfur donor for thiocarboxylation reactions. Prior mcm(5) tRNA modification by the elongator complex is required for 2-thiolation. May also be involved in protein urmylation. In Saccharomyces cerevisiae (strain YJM789) (Baker's yeast), this protein is Adenylyltransferase and sulfurtransferase UBA4.